Reading from the N-terminus, the 212-residue chain is Ropporin-1 (212 aa).

One can recognise an RIIa domain in the interval 12-43 (PELPELLKQFTKDAIRTQPPDLIQWAAEYFGA). At serine 56 the chain carries Phosphoserine. Positions 209–212 (VRLE) are interaction with RHPN1.

Belongs to the ropporin family. Homodimer. Interacts with AKAP3. May interact with SPA17. Interacts with RHPN1. Interacts with FSCB; the interaction increases upon spermatozoa capacitation conditions. Interacts with CFAP61. In terms of processing, sumoylated, sumoylation decreases upon spermatozoa capacitation conditions. Testis-specific. Present in the most inner parts of seminiferous tubules (at protein level).

The protein resides in the cell projection. It localises to the cilium. The protein localises to the flagellum. In terms of biological role, important for male fertility. With ROPN1L, involved in fibrous sheath integrity and sperm motility, plays a role in PKA-dependent signaling processes required for spermatozoa capacitation. This is Ropporin-1 (Ropn1) from Mus musculus (Mouse).